A 276-amino-acid chain; its full sequence is Glutamate 5-kinase (276 aa).

Lys14 serves as a coordination point for ATP. Residues Ser54, Asp141, and Asn157 each contribute to the substrate site. Residues 177–178 (SD) and 219–225 (TGGMLTK) contribute to the ATP site.

Belongs to the glutamate 5-kinase family.

Its subcellular location is the cytoplasm. The enzyme catalyses L-glutamate + ATP = L-glutamyl 5-phosphate + ADP. The protein operates within amino-acid biosynthesis; L-proline biosynthesis; L-glutamate 5-semialdehyde from L-glutamate: step 1/2. In terms of biological role, catalyzes the transfer of a phosphate group to glutamate to form L-glutamate 5-phosphate. This is Glutamate 5-kinase from Listeria monocytogenes serovar 1/2a (strain ATCC BAA-679 / EGD-e).